Here is a 257-residue protein sequence, read N- to C-terminus: Thiazole synthase (257 aa).

Lysine 96 functions as the Schiff-base intermediate with DXP in the catalytic mechanism. Residues glycine 157, 184–185, and 206–207 each bind 1-deoxy-D-xylulose 5-phosphate; these read AG and NT.

This sequence belongs to the ThiG family. Homotetramer. Forms heterodimers with either ThiH or ThiS.

Its subcellular location is the cytoplasm. The catalysed reaction is [ThiS sulfur-carrier protein]-C-terminal-Gly-aminoethanethioate + 2-iminoacetate + 1-deoxy-D-xylulose 5-phosphate = [ThiS sulfur-carrier protein]-C-terminal Gly-Gly + 2-[(2R,5Z)-2-carboxy-4-methylthiazol-5(2H)-ylidene]ethyl phosphate + 2 H2O + H(+). It participates in cofactor biosynthesis; thiamine diphosphate biosynthesis. Functionally, catalyzes the rearrangement of 1-deoxy-D-xylulose 5-phosphate (DXP) to produce the thiazole phosphate moiety of thiamine. Sulfur is provided by the thiocarboxylate moiety of the carrier protein ThiS. In vitro, sulfur can be provided by H(2)S. In Allorhizobium ampelinum (strain ATCC BAA-846 / DSM 112012 / S4) (Agrobacterium vitis (strain S4)), this protein is Thiazole synthase.